The sequence spans 313 residues: Porphobilinogen deaminase (313 aa).

Cys241 is modified (S-(dipyrrolylmethanemethyl)cysteine).

Belongs to the HMBS family. In terms of assembly, monomer. It depends on dipyrromethane as a cofactor.

The catalysed reaction is 4 porphobilinogen + H2O = hydroxymethylbilane + 4 NH4(+). It functions in the pathway porphyrin-containing compound metabolism; protoporphyrin-IX biosynthesis; coproporphyrinogen-III from 5-aminolevulinate: step 2/4. Its pathway is porphyrin-containing compound metabolism; chlorophyll biosynthesis. Tetrapolymerization of the monopyrrole PBG into the hydroxymethylbilane pre-uroporphyrinogen in several discrete steps. This is Porphobilinogen deaminase from Chlorobium chlorochromatii (strain CaD3).